The primary structure comprises 246 residues: MATSRTFIFSNLFIFFLVIATTYGQAPAPGPSGPTNITAILEKAGQFTLFIRLLKSTQASDQINTQLNSSSSNGLTVFAPTDNAFNSLKSGTLNSLSDQQKVQLVQFHVLPTLITMPQFQTVSNPLRTQAGDGQNGKFPLNITSSGNQVNITTGVVSATVANSVYSDKQLAVYQVDQVLLPLAMFGSSVAPAPAPEKGGSVSKGSASGGDDGGDSTDSSDAERTGFGFGIRITTVAAIAASSSLWI.

An N-terminal signal peptide occupies residues 1–24; it reads MATSRTFIFSNLFIFFLVIATTYG. An FAS1 domain is found at 34–179; it reads PTNITAILEK…LAVYQVDQVL (146 aa). Asn36, Asn68, Asn141, and Asn150 each carry an N-linked (GlcNAc...) asparagine glycan. Residues 193-222 are disordered; the sequence is PAPEKGGSVSKGSASGGDDGGDSTDSSDAE. Ser219 carries the GPI-anchor amidated serine lipid modification. A propeptide spans 220–246 (removed in mature form); that stretch reads DAERTGFGFGIRITTVAAIAASSSLWI.

It belongs to the fasciclin-like AGP family. Expressed in the sclerenchyma cells of inflorescence stems and siliques.

It localises to the cell membrane. May be a cell surface adhesion protein. This is Fasciclin-like arabinogalactan protein 11 (FLA11) from Arabidopsis thaliana (Mouse-ear cress).